Consider the following 137-residue polypeptide: UPF0148 protein MJ0890 (137 aa).

The protein belongs to the UPF0148 family.

This Methanocaldococcus jannaschii (strain ATCC 43067 / DSM 2661 / JAL-1 / JCM 10045 / NBRC 100440) (Methanococcus jannaschii) protein is UPF0148 protein MJ0890.